The primary structure comprises 264 residues: MKIEAVIFDWAGTTVDYGCFAPLEVFIKIFRKRGVKITDEEARKPMGLLKIDHVRALTEMPRIANEWERVFGHLPTEADIHEMYEEFEEILFTILPHYATPIDGVKEVVASLRKRGLKIGSTTGYTREMMDIVAKEAEIQGYKPDVLVTPDDVSAGRPYPWMCYKNAMELGVYPMNHMIKVGDTVSDMKEGRNAGMWTVGVILGSSELGLSEWAAETMDPVELREKMEVVRKRFVENGAHFTIETMQGLENVIEQIEKQEFIIS.

The Nucleophile role is filled by Asp-9. Positions 9 and 11 each coordinate Mg(2+). Residue Lys-50 is the Schiff-base intermediate with substrate of the active site. Asp-183 lines the Mg(2+) pocket.

This sequence belongs to the HAD-like hydrolase superfamily. PhnX family. Homodimer. Requires Mg(2+) as cofactor.

The enzyme catalyses phosphonoacetaldehyde + H2O = acetaldehyde + phosphate + H(+). In terms of biological role, involved in phosphonate degradation. This is Phosphonoacetaldehyde hydrolase from Bacillus cereus (strain AH187).